A 166-amino-acid polypeptide reads, in one-letter code: Endoribonuclease YbeY (166 aa).

Residues histidine 111, histidine 115, and histidine 121 each coordinate Zn(2+). The interval leucine 141 to glutamate 166 is disordered. Residues alanine 153–glutamate 166 show a composition bias toward basic and acidic residues.

This sequence belongs to the endoribonuclease YbeY family. Zn(2+) is required as a cofactor.

Its subcellular location is the cytoplasm. In terms of biological role, single strand-specific metallo-endoribonuclease involved in late-stage 70S ribosome quality control and in maturation of the 3' terminus of the 16S rRNA. The protein is Endoribonuclease YbeY of Pseudomonas syringae pv. tomato (strain ATCC BAA-871 / DC3000).